Reading from the N-terminus, the 214-residue chain is Imidazole glycerol phosphate synthase subunit HisH (214 aa).

One can recognise a Glutamine amidotransferase type-1 domain in the interval 2 to 214; that stretch reads RVALIDYGSG…LIANFLRWAP (213 aa). The Nucleophile role is filled by C88. Active-site residues include H194 and E196.

As to quaternary structure, heterodimer of HisH and HisF.

The protein localises to the cytoplasm. The catalysed reaction is 5-[(5-phospho-1-deoxy-D-ribulos-1-ylimino)methylamino]-1-(5-phospho-beta-D-ribosyl)imidazole-4-carboxamide + L-glutamine = D-erythro-1-(imidazol-4-yl)glycerol 3-phosphate + 5-amino-1-(5-phospho-beta-D-ribosyl)imidazole-4-carboxamide + L-glutamate + H(+). The enzyme catalyses L-glutamine + H2O = L-glutamate + NH4(+). It participates in amino-acid biosynthesis; L-histidine biosynthesis; L-histidine from 5-phospho-alpha-D-ribose 1-diphosphate: step 5/9. Functionally, IGPS catalyzes the conversion of PRFAR and glutamine to IGP, AICAR and glutamate. The HisH subunit catalyzes the hydrolysis of glutamine to glutamate and ammonia as part of the synthesis of IGP and AICAR. The resulting ammonia molecule is channeled to the active site of HisF. In Rhodospirillum rubrum (strain ATCC 11170 / ATH 1.1.1 / DSM 467 / LMG 4362 / NCIMB 8255 / S1), this protein is Imidazole glycerol phosphate synthase subunit HisH.